The sequence spans 328 residues: Beta-ketoacyl-[acyl-carrier-protein] synthase III (328 aa).

Residues Cys-113 and His-252 contribute to the active site. The tract at residues 253-257 is ACP-binding; that stretch reads QANLR. Residue Asn-282 is part of the active site.

This sequence belongs to the thiolase-like superfamily. FabH family. Homodimer.

The protein localises to the cytoplasm. It catalyses the reaction malonyl-[ACP] + acetyl-CoA + H(+) = 3-oxobutanoyl-[ACP] + CO2 + CoA. Its pathway is lipid metabolism; fatty acid biosynthesis. Catalyzes the condensation reaction of fatty acid synthesis by the addition to an acyl acceptor of two carbons from malonyl-ACP. Catalyzes the first condensation reaction which initiates fatty acid synthesis and may therefore play a role in governing the total rate of fatty acid production. Possesses both acetoacetyl-ACP synthase and acetyl transacylase activities. Its substrate specificity determines the biosynthesis of branched-chain and/or straight-chain of fatty acids. In Campylobacter fetus subsp. fetus (strain 82-40), this protein is Beta-ketoacyl-[acyl-carrier-protein] synthase III.